A 1133-amino-acid chain; its full sequence is Exportin-4 (1133 aa).

The protein belongs to the exportin family. Interacts with Ran and cargo proteins in a GTP-dependent manner.

The protein localises to the cytoplasm. It localises to the nucleus. Its function is as follows. Mediates the nuclear export of proteins (cargos). In the nucleus binds cooperatively to its cargo and to the GTPase Ran in its active GTP-bound form. Docking of this trimeric complex to the nuclear pore complex (NPC) is mediated through binding to nucleoporins. Upon transit of a nuclear export complex into the cytoplasm, disassembling of the complex and hydrolysis of Ran-GTP to Ran-GDP cause release of the cargo from the export receptor. Xpo4 then return to the nuclear compartment and mediate another round of transport. The directionality of nuclear export is thought to be conferred by an asymmetric distribution of the GTP- and GDP-bound forms of Ran between the cytoplasm and nucleus. The protein is Exportin-4 (xpo4) of Dictyostelium discoideum (Social amoeba).